The chain runs to 510 residues: NAD(P)H-quinone oxidoreductase subunit 2, chloroplastic (510 aa).

Helical transmembrane passes span 28–48, 57–77, 99–119, 124–144, 149–169, 183–203, 227–247, 295–315, 323–343, 354–374, 395–415, 418–438, and 484–504; these read DGSF…LLII, IPWL…TLLF, IFQF…VEYI, MALT…MFLC, LITI…LSGY, YLLM…WLYG, PGIS…LSPA, WHLL…LIAI, MLAY…IVGD, YMLF…LFGL, ALSL…AGFF, LYLF…IGLL, and MIVC…IIAI.

The protein belongs to the complex I subunit 2 family. As to quaternary structure, NDH is composed of at least 16 different subunits, 5 of which are encoded in the nucleus.

The protein localises to the plastid. It localises to the chloroplast thylakoid membrane. It catalyses the reaction a plastoquinone + NADH + (n+1) H(+)(in) = a plastoquinol + NAD(+) + n H(+)(out). The catalysed reaction is a plastoquinone + NADPH + (n+1) H(+)(in) = a plastoquinol + NADP(+) + n H(+)(out). NDH shuttles electrons from NAD(P)H:plastoquinone, via FMN and iron-sulfur (Fe-S) centers, to quinones in the photosynthetic chain and possibly in a chloroplast respiratory chain. The immediate electron acceptor for the enzyme in this species is believed to be plastoquinone. Couples the redox reaction to proton translocation, and thus conserves the redox energy in a proton gradient. The polypeptide is NAD(P)H-quinone oxidoreductase subunit 2, chloroplastic (Silene latifolia (White campion)).